A 245-amino-acid polypeptide reads, in one-letter code: MRLIMNADDFGISKAINLGIIEGFKNGIVTSTTLMCNMETTEHAVNLAKENSKLGVGIHLVLTAGRPLSKNVKTLVDNEGNFLKYDKMVESACIEDIRIEFRNQFEKFLSFGIVPTHIDTHHHVHSIESVFEVVAELAKEHNIPIRHIKAIGEEKYENIKTTTEFIDSFYNLSMIEPQMLINLLDDNMNVDSLEIMCHPGYLDSKILSSSSYAYPRVKELETLTNKEVIQFINEKNIELINFKDI.

Residues His59 and His121 each contribute to the Mg(2+) site.

The protein belongs to the YdjC deacetylase family. Homodimer. Requires Mg(2+) as cofactor.

Probably catalyzes the deacetylation of acetylated carbohydrates an important step in the degradation of oligosaccharides. The sequence is that of Carbohydrate deacetylase from Clostridium beijerinckii (strain ATCC 51743 / NCIMB 8052) (Clostridium acetobutylicum).